We begin with the raw amino-acid sequence, 239 residues long: Suppressor of organelle fusion 1 (239 aa).

It belongs to the WD repeat WDR91 family. Interacts with sorf-2; the interaction is direct. Interacts with bec-1.

It localises to the early endosome. The protein resides in the late endosome. The protein localises to the cytoplasm. In terms of biological role, together with sorf-2 negatively regulates the levels of phosphatidylinositol 3-phosphate (PtdIns3P) to enable the conversion of early endosomes to late endosomes. Binds to sorf-2 and the sorf-1-sorf-2 complex likely acts through bec-1, a non-catalytic subunit of phosphatidylinositol 3-kinase (PI3K), to suppress PI3K activity, thereby negatively regulating endosomal PtdIns3P levels. In Caenorhabditis elegans, this protein is Suppressor of organelle fusion 1.